The primary structure comprises 59 residues: Large ribosomal subunit protein bL32 (59 aa).

The span at 1–15 (MAVPKKKTSKSKRDM) shows a compositional bias: basic residues. The tract at residues 1–26 (MAVPKKKTSKSKRDMRRATWNRKAAA) is disordered.

The protein belongs to the bacterial ribosomal protein bL32 family.

This is Large ribosomal subunit protein bL32 from Cyanothece sp. (strain PCC 7425 / ATCC 29141).